Consider the following 579-residue polypeptide: General transcription and DNA repair factor IIH subunit TFB1-3 (579 aa).

BSD domains lie at 107–161 (LTPA…GKDS) and 186–238 (RTNR…YLYS).

The protein belongs to the TFB1 family. In terms of assembly, component of the 7-subunit TFIIH core complex composed of XPB, XPD, TFB1/GTF2H1, GTF2H2/P44, TFB4/GTF2H3, TFB2/GTF2H4 and TFB5/GTF2H5, which is active in NER. The core complex associates with the 3-subunit CDK-activating kinase (CAK) module composed of CYCH1/cyclin H1, CDKD and MAT1/At4g30820 to form the 10-subunit holoenzyme (holo-TFIIH) active in transcription.

It is found in the nucleus. Its function is as follows. Component of the general transcription and DNA repair factor IIH (TFIIH) core complex, which is involved in general and transcription-coupled nucleotide excision repair (NER) of damaged DNA and, when complexed to CAK, in RNA transcription by RNA polymerase II. In NER, TFIIH acts by opening DNA around the lesion to allow the excision of the damaged oligonucleotide and its replacement by a new DNA fragment. In transcription, TFIIH has an essential role in transcription initiation. When the pre-initiation complex (PIC) has been established, TFIIH is required for promoter opening and promoter escape. Phosphorylation of the C-terminal tail (CTD) of the largest subunit of RNA polymerase II by the kinase module CAK controls the initiation of transcription. The chain is General transcription and DNA repair factor IIH subunit TFB1-3 from Arabidopsis thaliana (Mouse-ear cress).